The sequence spans 359 residues: DNA integrity scanning protein DisA (359 aa).

Residues 7 to 145 form the DAC domain; that stretch reads DPTGRAVLRA…DGRRWVLEDS (139 aa). ATP is bound by residues Gly-74, Leu-92, and 105-109; that span reads TRHRT.

This sequence belongs to the DisA family. In terms of assembly, homooctamer. It depends on Mg(2+) as a cofactor.

The enzyme catalyses 2 ATP = 3',3'-c-di-AMP + 2 diphosphate. Its function is as follows. Participates in a DNA-damage check-point. DisA forms globular foci that rapidly scan along the chromosomes searching for lesions. In terms of biological role, also has diadenylate cyclase activity, catalyzing the condensation of 2 ATP molecules into cyclic di-AMP (c-di-AMP). c-di-AMP likely acts as a signaling molecule that may couple DNA integrity with a cellular process. In Beutenbergia cavernae (strain ATCC BAA-8 / DSM 12333 / CCUG 43141 / JCM 11478 / NBRC 16432 / NCIMB 13614 / HKI 0122), this protein is DNA integrity scanning protein DisA.